The primary structure comprises 761 residues: Xaa-Pro dipeptidyl-peptidase (761 aa).

Residues Ser-347, Asp-467, and His-497 each act as charge relay system in the active site.

It belongs to the peptidase S15 family. As to quaternary structure, homodimer.

It localises to the cytoplasm. It catalyses the reaction Hydrolyzes Xaa-Pro-|- bonds to release unblocked, N-terminal dipeptides from substrates including Ala-Pro-|-p-nitroanilide and (sequentially) Tyr-Pro-|-Phe-Pro-|-Gly-Pro-|-Ile.. Functionally, removes N-terminal dipeptides sequentially from polypeptides having unsubstituted N-termini provided that the penultimate residue is proline. In Streptococcus agalactiae serotype V (strain ATCC BAA-611 / 2603 V/R), this protein is Xaa-Pro dipeptidyl-peptidase.